Reading from the N-terminus, the 405-residue chain is Aminodeoxyfutalosine deaminase (405 aa).

Residues histidine 61 and histidine 63 each coordinate a divalent metal cation. The substrate site is built by glutamate 141, serine 145, and histidine 179. Histidine 206 is a binding site for a divalent metal cation. Residue glutamate 209 is the Proton donor of the active site. Aspartate 306 provides a ligand contact to a divalent metal cation.

The protein belongs to the metallo-dependent hydrolases superfamily. A divalent metal cation serves as cofactor.

The enzyme catalyses 6-amino-6-deoxyfutalosine + H2O + H(+) = futalosine + NH4(+). Its pathway is quinol/quinone metabolism; menaquinone biosynthesis. Catalyzes the deamination of aminodeoxyfutalosine (AFL) into futalosine (FL), a step in the biosynthesis of menaquinone (MK, vitamin K2). To a lesser extent, can also deaminate 5'-methylthioadenosine. The protein is Aminodeoxyfutalosine deaminase of Nitratiruptor sp. (strain SB155-2).